Here is a 176-residue protein sequence, read N- to C-terminus: Mitochondrial inner membrane protein Mpv17 (176 aa).

Helical transmembrane passes span 18–38 (VQVLTAGSLMGLGDVISQQLV), 53–73 (TMASLGCGFVGPVVGGWYRVL), 94–114 (GGFAPCFLGCFLPLVGTLNGL), and 131–151 (LITNYYLWPAVQLANFYLVPL).

The protein belongs to the peroxisomal membrane protein PXMP2/4 family.

Its subcellular location is the mitochondrion inner membrane. Functionally, non-selective channel that modulates the membrane potential under normal conditions and oxidative stress, and is involved in mitochondrial homeostasis. Involved in mitochondrial deoxynucleoside triphosphates (dNTP) pool homeostasis and mitochondrial DNA (mtDNA) maintenance. May be involved in the regulation of reactive oxygen species metabolism and the control of oxidative phosphorylation. This Bos taurus (Bovine) protein is Mitochondrial inner membrane protein Mpv17.